The following is a 274-amino-acid chain: Thiazole synthase (274 aa).

The active-site Schiff-base intermediate with DXP is Lys-111. 1-deoxy-D-xylulose 5-phosphate is bound by residues Gly-172, Ala-198–Gly-199, and Asn-220–Ser-221. The interval Arg-251–Lys-274 is disordered.

It belongs to the ThiG family. As to quaternary structure, homotetramer. Forms heterodimers with either ThiH or ThiS.

The protein resides in the cytoplasm. The enzyme catalyses [ThiS sulfur-carrier protein]-C-terminal-Gly-aminoethanethioate + 2-iminoacetate + 1-deoxy-D-xylulose 5-phosphate = [ThiS sulfur-carrier protein]-C-terminal Gly-Gly + 2-[(2R,5Z)-2-carboxy-4-methylthiazol-5(2H)-ylidene]ethyl phosphate + 2 H2O + H(+). It participates in cofactor biosynthesis; thiamine diphosphate biosynthesis. Its function is as follows. Catalyzes the rearrangement of 1-deoxy-D-xylulose 5-phosphate (DXP) to produce the thiazole phosphate moiety of thiamine. Sulfur is provided by the thiocarboxylate moiety of the carrier protein ThiS. In vitro, sulfur can be provided by H(2)S. This is Thiazole synthase from Prochlorococcus marinus (strain MIT 9313).